The following is a 197-amino-acid chain: Probable nicotinate-nucleotide adenylyltransferase (197 aa).

This sequence belongs to the NadD family.

The catalysed reaction is nicotinate beta-D-ribonucleotide + ATP + H(+) = deamido-NAD(+) + diphosphate. It functions in the pathway cofactor biosynthesis; NAD(+) biosynthesis; deamido-NAD(+) from nicotinate D-ribonucleotide: step 1/1. Functionally, catalyzes the reversible adenylation of nicotinate mononucleotide (NaMN) to nicotinic acid adenine dinucleotide (NaAD). In Borrelia garinii subsp. bavariensis (strain ATCC BAA-2496 / DSM 23469 / PBi) (Borreliella bavariensis), this protein is Probable nicotinate-nucleotide adenylyltransferase.